Here is a 283-residue protein sequence, read N- to C-terminus: Foldase protein PrsA 3 (283 aa).

The signal sequence occupies residues 1–21 (MKKKKIFIGTIISCVMLALSA). Residue Cys22 is the site of N-palmitoyl cysteine attachment. Cys22 carries S-diacylglycerol cysteine lipidation. Residues 132–222 (KPEMKVSHIL…YGYHIIKVTD (91 aa)) enclose the PpiC domain.

It belongs to the PrsA family.

It is found in the cell membrane. The enzyme catalyses [protein]-peptidylproline (omega=180) = [protein]-peptidylproline (omega=0). In terms of biological role, plays a major role in protein secretion by helping the post-translocational extracellular folding of several secreted proteins. The polypeptide is Foldase protein PrsA 3 (prsA3) (Bacillus cereus (strain ATCC 14579 / DSM 31 / CCUG 7414 / JCM 2152 / NBRC 15305 / NCIMB 9373 / NCTC 2599 / NRRL B-3711)).